A 117-amino-acid polypeptide reads, in one-letter code: Protein YchN (117 aa).

This sequence to M.jannaschii MJ0989. As to quaternary structure, homohexamer. The hexamer is formed by a dimer of trimers.

In Escherichia coli O157:H7, this protein is Protein YchN (ychN).